The primary structure comprises 487 residues: MDEDLVLALQLQEEWNLQVSEREPAQEPLSLVDASWELVDPTPDLQGLFVLFNDRFFWGQLEAVEVKWSVRMTLCAGICSYEGRGGMCSIRLSEPLLKLRPRKDLVETLLHEMIHAYLFVTNNDKDREGHGPEFCKHMHRINRLTGANITVYHTFHDEVDEYRRHWWRCNGPCQNSKPYYGYVKRATNRAPSAHDYWWAEHQKTCGGTYIKIKEPENYSKKGKGKTKLRKQPVSEAENKDKPNRGEKQLLIPFTGKGYVLGETSNFSSGKCITSHAINESQEPLSQDHSANALRPHSKTEVKFEQNGPSKKTSVASPVLSTSHQNVLSNYFSKVSVASSKAFRSVSGSPVKSLTVGDSTTKSVSAGSQRRVTSSRTSLRNSLKAMESTYVTVPQDAGGPEGKLPSKRPRIEDKTFFDLFFIKKEQAQSGGGDVTSSSHPPAAAQSPSGASGQSRVVHCPVCQDEVSETQINEHLDWCLERDSTQVKS.

Methionine 1 is modified (N-acetylmethionine). Residues 45–212 (LQGLFVLFND…KTCGGTYIKI (168 aa)) form the SprT-like domain. Zn(2+) is bound at residue histidine 111. The active site involves glutamate 112. Residues histidine 115 and histidine 130 each contribute to the Zn(2+) site. The disordered stretch occupies residues 219 to 248 (SKKGKGKTKLRKQPVSEAENKDKPNRGEKQ). The segment covering 220–230 (KKGKGKTKLRK) has biased composition (basic residues). At lysine 230 the chain carries N6-acetyllysine. Residues 236-247 (AENKDKPNRGEK) show a composition bias toward basic and acidic residues. Positions 253–261 (FTGKGYVLG) match the SHP-box motif. The residue at position 267 (serine 267) is a Phosphoserine. Positions 280 to 289 (SQEPLSQDHS) are enriched in polar residues. Positions 280–317 (SQEPLSQDHSANALRPHSKTEVKFEQNGPSKKTSVASP) are disordered. Lysine 302 is covalently cross-linked (Glycyl lysine isopeptide (Lys-Gly) (interchain with G-Cter in SUMO2)). Polar residues predominate over residues 306-317 (NGPSKKTSVASP). The short motif at 324 to 331 (QNVLSNYF) is the PIP-box element. Residue lysine 340 forms a Glycyl lysine isopeptide (Lys-Gly) (interchain with G-Cter in SUMO2); alternate linkage. Lysine 340 is covalently cross-linked (Glycyl lysine isopeptide (Lys-Gly) (interchain with G-Cter in ubiquitin); alternate). A disordered region spans residues 347–379 (GSPVKSLTVGDSTTKSVSAGSQRRVTSSRTSLR). Serine 373 is subject to Phosphoserine. Positions 401–412 (GKLPSKRPRIED) match the Nuclear localization signal motif. Lysine 413 participates in a covalent cross-link: Glycyl lysine isopeptide (Lys-Gly) (interchain with G-Cter in ubiquitin). Glycyl lysine isopeptide (Lys-Gly) (interchain with G-Cter in SUMO2) cross-links involve residues lysine 422 and lysine 423. A disordered region spans residues 427 to 455 (QSGGGDVTSSSHPPAAAQSPSGASGQSRV). A compositionally biased stretch (low complexity) spans 435–453 (SSSHPPAAAQSPSGASGQS). Residues 455 to 482 (VVHCPVCQDEVSETQINEHLDWCLERDS) form a UBZ4-type zinc finger. Residues cysteine 458, cysteine 461, histidine 473, and cysteine 477 each coordinate Zn(2+). Lysine 486 participates in a covalent cross-link: Glycyl lysine isopeptide (Lys-Gly) (interchain with G-Cter in SUMO2).

This sequence belongs to the Spartan family. Homodimer. Interacts (VIA PIP-box) with PCNA (when ubiquitinated). Interacts (via its SHP-box) with VCP/p97. Interacts with RAD18. Interacts with KCTD13 and POLD3. Zn(2+) serves as cofactor. In terms of processing, autocatalytically cleaved in response to double-stranded DNA-binding: autocatalytic cleavage takes place in trans and leads to inactivation. Monoubiquitinated; monoubiquitination promotes exclusion from chromatin. Deubiquitinated by VCPIP1: deubiquitination is required for subsequent acetylation and recruitment to chromatin and DNA damage sites. Post-translationally, acetylated following deubiquitination by VCPIP1, leading to recruitment to chromatin and DNA damage sites. In terms of processing, phosphorylation by CHEK1 promotes recruitment to chromatin.

The protein resides in the nucleus. Its subcellular location is the chromosome. Its activity is regulated as follows. DNA-binding activates the protease activity: single-stranded DNA-binding specifically activates ability to cleave covalent DNA-protein cross-links (DPCs). In contrast, double-stranded DNA-binding specifically activates autocatalytic cleavage, and subsequent inactivation. Functionally, DNA-dependent metalloendopeptidase that mediates the proteolytic cleavage of covalent DNA-protein cross-links (DPCs) during DNA synthesis, thereby playing a key role in maintaining genomic integrity. DPCs are highly toxic DNA lesions that interfere with essential chromatin transactions, such as replication and transcription, and which are induced by reactive agents, such as UV light or formaldehyde. Associates with the DNA replication machinery and specifically removes DPCs during DNA synthesis. Catalyzes proteolytic cleavage of the HMCES DNA-protein cross-link following unfolding by the BRIP1/FANCJ helicase. Acts as a pleiotropic protease for DNA-binding proteins cross-linked with DNA, such as TOP1, TOP2A, histones H3 and H4. Mediates degradation of DPCs that are not ubiquitinated, while it is not able to degrade ubiquitinated DPCs. SPRTN activation requires polymerase collision with DPCs followed by helicase bypass of DPCs. Involved in recruitment of VCP/p97 to sites of DNA damage. Also acts as an activator of CHEK1 during normal DNA replication by mediating proteolytic cleavage of CHEK1, thereby promoting CHEK1 removal from chromatin and subsequent activation. Does not activate CHEK1 in response to DNA damage. May also act as a 'reader' of ubiquitinated PCNA: recruited to sites of UV damage and interacts with ubiquitinated PCNA and RAD18, the E3 ubiquitin ligase that monoubiquitinates PCNA. Facilitates chromatin association of RAD18 and is required for efficient PCNA monoubiquitination, promoting a feed-forward loop to enhance PCNA ubiquitination and translesion DNA synthesis. This is DNA-dependent metalloprotease SPRTN from Bos taurus (Bovine).